Consider the following 108-residue polypeptide: Small proline-rich protein 2H (108 aa).

Low complexity predominate over residues 1 to 11; sequence MSYQQQQCKQP. The disordered stretch occupies residues 1–22; sequence MSYQQQQCKQPCQPPPVCPPPQ. A compositionally biased stretch (pro residues) spans 12-22; the sequence is CQPPPVCPPPQ. Tandem repeats lie at residues 21-29, 30-38, 39-47, 48-56, 57-65, 66-74, and 75-83. The 7 X 9 AA tandem repeats of P-[KQ]-C-[PT]-E-P-C-P-P stretch occupies residues 21–83; sequence PQCPEPCPPP…PPKCTEPCPP (63 aa). A disordered region spans residues 83–108; it reads PPSYQQKCPSVQPSPPCQQKCPPKNK. A compositionally biased stretch (low complexity) spans 87–108; sequence QQKCPSVQPSPPCQQKCPPKNK.

It belongs to the cornifin (SPRR) family. Expressed weakly in uterus.

It is found in the cytoplasm. Cross-linked envelope protein of keratinocytes. It is a keratinocyte protein that first appears in the cell cytosol, but ultimately becomes cross-linked to membrane proteins by transglutaminase. All that results in the formation of an insoluble envelope beneath the plasma membrane. In Mus musculus (Mouse), this protein is Small proline-rich protein 2H (Sprr2h).